The primary structure comprises 270 residues: Cytosolic Fe-S cluster assembly factor NUBP2 homolog (270 aa).

Residue 21-28 (GKGGVGKS) participates in ATP binding. Cys-195 and Cys-198 together coordinate [4Fe-4S] cluster.

It belongs to the Mrp/NBP35 ATP-binding proteins family. NUBP2/CFD1 subfamily. In terms of assembly, heterotetramer of 2 NUBP1 and 2 NUBP2 chains. [4Fe-4S] cluster is required as a cofactor.

It is found in the cytoplasm. In terms of biological role, component of the cytosolic iron-sulfur (Fe/S) protein assembly (CIA) machinery. Required for maturation of extramitochondrial Fe-S proteins. The NUBP1-NUBP2 heterotetramer forms a Fe-S scaffold complex, mediating the de novo assembly of an Fe-S cluster and its transfer to target apoproteins. The chain is Cytosolic Fe-S cluster assembly factor NUBP2 homolog from Nematostella vectensis (Starlet sea anemone).